The chain runs to 760 residues: uncharacterized protein (760 aa).

The N-terminal stretch at 1 to 20 (MKFKLFLGSSFFGVATLLIA) is a signal peptide. A lipid anchor (N-palmitoyl cysteine) is attached at C21. A lipid anchor (S-diacylglycerol cysteine) is attached at C21. 3 disordered regions span residues 221–243 (ENAA…LQLK), 272–315 (AKTN…TSDD), and 705–741 (IKAT…NDKA). The segment covering 272 to 284 (AKTNGEKGNEKQE) has biased composition (basic and acidic residues). Positions 300-312 (KNTSQDKTQNTQT) are enriched in polar residues. The segment covering 705 to 721 (IKATSKEGEQNQGKKGD) has biased composition (basic and acidic residues).

The protein belongs to the MG185/MG260 family.

The protein resides in the cell membrane. This is an uncharacterized protein from Mycoplasma pneumoniae (strain ATCC 29342 / M129 / Subtype 1) (Mycoplasmoides pneumoniae).